The primary structure comprises 183 residues: MIAKKRNIQTFLIFSLATILGGIYWYVRSFWISGDPFSPAGGNIFGHYLWNEIDLQVQTAEQARHGISPATLDLQQAINKVGSDVVFYAILSVFTLRNNKILWVFFSIVLTYVLFWFSVTQGDRYLSPIYPLSVLQVAISIASLIKDINITNYKLGRYFILVCIIFFRGDRCILNSNIFILNT.

This is an uncharacterized protein from Shigella flexneri.